The sequence spans 359 residues: Endosome-associated-trafficking regulator 1 (359 aa).

Ser-18 and Ser-74 each carry phosphoserine. The tract at residues 100-125 is required for interaction with PTPN13; sequence LLDEDEDEEDGWNGAYLPSAMEQTHS. A disordered region spans residues 153 to 180; the sequence is SLPPWTLSDSDSRISPTGSPSADFTAHG. The segment covering 159-174 has biased composition (polar residues); that stretch reads LSDSDSRISPTGSPSA. Residues Ser-167 and Ser-171 each carry the phosphoserine modification. Residues 185 to 295 are a coiled coil; the sequence is DRHLRTLQIS…FKRENEALRS (111 aa).

Belongs to the ENTR1 family. As to quaternary structure, found in a complex with ENTR1, PTPN13 and GIT1. Interacts with PTPN13 (via the FERM domain). Interacts (via N-terminus) with GIT1 (via N- and C-terminus); this interaction is direct. Interacts with NOD2. Interacts (via N-terminus) with IFT88. Interacts with VPS35. In terms of processing, phosphorylated.

Its subcellular location is the cytoplasm. It is found in the early endosome. The protein localises to the endosome. It localises to the recycling endosome. The protein resides in the midbody. Its subcellular location is the cytoskeleton. It is found in the microtubule organizing center. The protein localises to the centrosome. It localises to the cilium basal body. Functionally, endosome-associated protein that plays a role in membrane receptor sorting, cytokinesis and ciliogenesis. Involved in the endosome-to-plasma membrane trafficking and recycling of SNX27-retromer-dependent cargo proteins, such as GLUT1. Involved in the regulation of cytokinesis; the function may involve PTPN13 and GIT1. Plays a role in the formation of cilia. Involved in cargo protein localization, such as PKD2, at primary cilia. Involved in the presentation of the tumor necrosis factor (TNF) receptor TNFRSF1A on the cell surface, and hence in the modulation of the TNF-induced apoptosis. The protein is Endosome-associated-trafficking regulator 1 of Bos taurus (Bovine).